We begin with the raw amino-acid sequence, 527 residues long: Protein PLASTID TRANSCRIPTIONALLY ACTIVE 12, chloroplastic (527 aa).

The transit peptide at 1 to 30 directs the protein to the chloroplast; sequence MASISTTTWLYRGQVCTDSGKSSNCIVQRR. The segment at 1–115 is PHYA-interacting region 1 (PIR1); sequence MASISTTTWL…ASIPGEDYWP (115 aa). The segment at 89-188 is disordered; that stretch reads SYMDSTSGKL…NDSSDGFVTY (100 aa). Over residues 163-181 the composition is skewed to acidic residues; the sequence is TNDEVSDSEDSSEEEENDS. 2 short sequence motifs (nuclear localization signal) span residues 204–211 and 235–242; these read DKKLGRPH and WRKPEKEQ. Residues 252 to 352 form a PHYA-interacting region 2 (PIR2) region; sequence DVETVFLKAM…EMFSHQTDRE (101 aa). The span at 458–471 shows a compositional bias: acidic residues; the sequence is GENDDDEDDADVEK. The tract at residues 458–527 is disordered; the sequence is GENDDDEDDA…LMDFEEETDP (70 aa). Residues 485–504 are compositionally biased toward basic and acidic residues; it reads ETPELRTAKPKPKKEGRMSL. Over residues 506–527 the composition is skewed to acidic residues; that stretch reads EAVDDAENLTDFLMDFEEETDP. A Required and sufficient for transcriptional transactivation activity and to trigger PIF proteins degradation motif is present at residues 512–520; the sequence is ENLTDFLMD.

In terms of assembly, component of the transcriptionally active chromosome (TAC) complexes. Interacts with PTAC14 and PTAC7. Binds directly to PTAC6/PAP8 in the nucleus. Interacts with MED14. Binds to SL1/MTERF3. Binds to photoactivated phytochromes (e.g. PHYA and PHYB) via their photosensory domains; these interactions stimulate its light-mediated accumulation. Associates, via its N-terminal region, with phytochrome-interacting factors (PIFs) including PIF1, PIF3, PIF4, PIF5, PIF6, BHLH72/PIF7, UNE10/PIF8 and PIL1. Binds to RAD4. Associates with MRL7/RCB. Mostly expressed in cotyledons, leaves, stems and flowers, but barely in roots.

The protein localises to the plastid. It localises to the chloroplast. The protein resides in the nucleus. In terms of biological role, involved in plastid gene expression. Acidic transcriptional coactivator necessary for the transactivation of many PIFs target genes (class B genes), particularly during the regulation of hypocotyl growth. Plays dual opposite roles in regulating hypocotyl growth, preventing it in red and far-red conditions, but promoting it otherwise. Required in the nucleus for the initiation of photomorphogenesis mediated by phytochromes (PHYs) (e.g. PHYA and PHYB) by mediating PHYs localization to photobodies, especially in response to red and far-red light, and implicating phytochrome nuclear bodies as sites of proteolysis for PHYs and PIFs proteins (e.g. PIF1 and PIF3). Acts downstream of PHYs and upstream of DET1. Involved in UV tolerance in both roots and hypocotyls, specifically in dark conditions. Element of a PIF4/HMR/MED14-dependent thermoresponsive process; acts as a PIF4 transcriptional coactivator to trigger the thermoresponsive growth-relevant genes (e.g. mainly involved in biosynthesis and signaling of the phytohormone auxin) and promote warm-temperature-dependent (e.g. 27 degrees Celsius) PIF4 and MED14 stabilization and accumulation, being more prominently involved in long days (LD) and continuous red light (Rc) than in short days (SD), thus modulating warm temperature elicitation of MED14-dependent thermomorphogenesis (e.g. hypocotyl elongation). This chain is Protein PLASTID TRANSCRIPTIONALLY ACTIVE 12, chloroplastic, found in Arabidopsis thaliana (Mouse-ear cress).